The following is a 145-amino-acid chain: ATP synthase epsilon chain (145 aa).

Residues arginine 100 to glutamate 123 form a disordered region. Positions glutamine 106–glutamate 123 are enriched in basic and acidic residues.

This sequence belongs to the ATPase epsilon chain family. As to quaternary structure, F-type ATPases have 2 components, CF(1) - the catalytic core - and CF(0) - the membrane proton channel. CF(1) has five subunits: alpha(3), beta(3), gamma(1), delta(1), epsilon(1). CF(0) has three main subunits: a, b and c.

Its subcellular location is the cell membrane. In terms of biological role, produces ATP from ADP in the presence of a proton gradient across the membrane. This is ATP synthase epsilon chain from Latilactobacillus sakei subsp. sakei (strain 23K) (Lactobacillus sakei subsp. sakei).